Consider the following 432-residue polypeptide: N-acylneuraminate cytidylyltransferase (432 aa).

Residue Met1 is modified to N-acetylmethionine. A disordered region spans residues Met1–Glu38. The BC1 motif signature appears at Pro15–Arg31. Positions Arg18–Arg29 are enriched in basic residues. Omega-N-methylarginine is present on residues Arg35 and Arg50. Substrate is bound by residues Arg50, Asn60, Arg109, Ser118, Ser120, and Gln141. The short motif at Lys198–Asp204 is the BC2 motif element. Arg199 is an active-site residue. The short motif at Lys267–Lys274 is the BC3 motif element.

This sequence belongs to the CMP-NeuNAc synthase family. Homotetramer; the active enzyme is formed by a dimer of dimers. As to expression, liver.

Its subcellular location is the nucleus. It catalyses the reaction an N-acylneuraminate + CTP = a CMP-N-acyl-beta-neuraminate + diphosphate. The protein operates within amino-sugar metabolism; N-acetylneuraminate metabolism. Catalyzes the activation of N-acetylneuraminic acid (NeuNAc) to cytidine 5'-monophosphate N-acetylneuraminic acid (CMP-NeuNAc), a substrate required for the addition of sialic acid. Has some activity toward NeuNAc, N-glycolylneuraminic acid (Neu5Gc) or 2-keto-3-deoxy-D-glycero-D-galacto-nononic acid (KDN). The sequence is that of N-acylneuraminate cytidylyltransferase (Cmas) from Rattus norvegicus (Rat).